Consider the following 239-residue polypeptide: 4-hydroxy-tetrahydrodipicolinate reductase (239 aa).

Residues 8-13 (GSTGKM), 78-80 (GTT), and 102-105 (SANM) contribute to the NAD(+) site. The active-site Proton donor/acceptor is the His134. His135 is a (S)-2,3,4,5-tetrahydrodipicolinate binding site. Lys138 acts as the Proton donor in catalysis. 144–145 (GT) is a binding site for (S)-2,3,4,5-tetrahydrodipicolinate.

Belongs to the DapB family.

It localises to the cytoplasm. The enzyme catalyses (S)-2,3,4,5-tetrahydrodipicolinate + NAD(+) + H2O = (2S,4S)-4-hydroxy-2,3,4,5-tetrahydrodipicolinate + NADH + H(+). The catalysed reaction is (S)-2,3,4,5-tetrahydrodipicolinate + NADP(+) + H2O = (2S,4S)-4-hydroxy-2,3,4,5-tetrahydrodipicolinate + NADPH + H(+). The protein operates within amino-acid biosynthesis; L-lysine biosynthesis via DAP pathway; (S)-tetrahydrodipicolinate from L-aspartate: step 4/4. Its function is as follows. Catalyzes the conversion of 4-hydroxy-tetrahydrodipicolinate (HTPA) to tetrahydrodipicolinate. This is 4-hydroxy-tetrahydrodipicolinate reductase from Rickettsia africae (strain ESF-5).